A 520-amino-acid polypeptide reads, in one-letter code: Peptide chain release factor 3 (520 aa).

Residues 8-277 enclose the tr-type G domain; that stretch reads ESRKTFAIIS…FAPMPNARQT (270 aa). GTP-binding positions include 17-24, 85-89, and 139-142; these read SHPDAGKT, DTPGH, and NKLD.

The protein belongs to the TRAFAC class translation factor GTPase superfamily. Classic translation factor GTPase family. PrfC subfamily.

Its subcellular location is the cytoplasm. Its function is as follows. Increases the formation of ribosomal termination complexes and stimulates activities of RF-1 and RF-2. It binds guanine nucleotides and has strong preference for UGA stop codons. It may interact directly with the ribosome. The stimulation of RF-1 and RF-2 is significantly reduced by GTP and GDP, but not by GMP. This chain is Peptide chain release factor 3, found in Staphylococcus aureus (strain USA300 / TCH1516).